The chain runs to 148 residues: Large ribosomal subunit protein bL9 (148 aa).

The protein belongs to the bacterial ribosomal protein bL9 family.

Binds to the 23S rRNA. This Pseudomonas aeruginosa (strain LESB58) protein is Large ribosomal subunit protein bL9.